The following is a 142-amino-acid chain: Small ribosomal subunit protein bS6 (142 aa).

Residues 96 to 142 form a disordered region; that stretch reads VTGQSEMLKAEENRSERRERRERPEHDGSADGDDSDSDSDNSDNADE. Over residues 103–124 the composition is skewed to basic and acidic residues; that stretch reads LKAEENRSERRERRERPEHDGS. The span at 125–142 shows a compositional bias: acidic residues; sequence ADGDDSDSDSDNSDNADE.

This sequence belongs to the bacterial ribosomal protein bS6 family.

Functionally, binds together with bS18 to 16S ribosomal RNA. This Pseudomonas fluorescens (strain Pf0-1) protein is Small ribosomal subunit protein bS6.